The chain runs to 169 residues: S-ribosylhomocysteine lyase (169 aa).

His-54, His-58, and Cys-129 together coordinate Fe cation.

This sequence belongs to the LuxS family. In terms of assembly, homodimer. Fe cation is required as a cofactor.

It carries out the reaction S-(5-deoxy-D-ribos-5-yl)-L-homocysteine = (S)-4,5-dihydroxypentane-2,3-dione + L-homocysteine. Functionally, involved in the synthesis of autoinducer 2 (AI-2) which is secreted by bacteria and is used to communicate both the cell density and the metabolic potential of the environment. The regulation of gene expression in response to changes in cell density is called quorum sensing. Catalyzes the transformation of S-ribosylhomocysteine (RHC) to homocysteine (HC) and 4,5-dihydroxy-2,3-pentadione (DPD). In Haemophilus ducreyi (strain 35000HP / ATCC 700724), this protein is S-ribosylhomocysteine lyase.